The following is a 715-amino-acid chain: Polyribonucleotide nucleotidyltransferase (715 aa).

Mg(2+) is bound by residues Asp500 and Asp506. The KH domain maps to 567-634 (PKVKMIRINP…AYIESLVREA (68 aa)). Residues 637 to 712 (GELYEAKVTR…ERGRVDLSRK (76 aa)) enclose the S1 motif domain.

This sequence belongs to the polyribonucleotide nucleotidyltransferase family. Mg(2+) is required as a cofactor.

Its subcellular location is the cytoplasm. The catalysed reaction is RNA(n+1) + phosphate = RNA(n) + a ribonucleoside 5'-diphosphate. Its function is as follows. Involved in mRNA degradation. Catalyzes the phosphorolysis of single-stranded polyribonucleotides processively in the 3'- to 5'-direction. The chain is Polyribonucleotide nucleotidyltransferase from Acholeplasma laidlawii (strain PG-8A).